The following is a 635-amino-acid chain: Threonine--tRNA ligase (635 aa).

The TGS domain maps to 1-62 (MITITLPDGS…EHDAMLRIIT (62 aa)). The catalytic stretch occupies residues 244 to 535 (DHRKIGKVQD…LIEHYAGIWP (292 aa)). Cys335, His386, and His512 together coordinate Zn(2+).

Belongs to the class-II aminoacyl-tRNA synthetase family. In terms of assembly, homodimer. Requires Zn(2+) as cofactor.

It is found in the cytoplasm. It carries out the reaction tRNA(Thr) + L-threonine + ATP = L-threonyl-tRNA(Thr) + AMP + diphosphate + H(+). Functionally, catalyzes the attachment of threonine to tRNA(Thr) in a two-step reaction: L-threonine is first activated by ATP to form Thr-AMP and then transferred to the acceptor end of tRNA(Thr). Also edits incorrectly charged L-seryl-tRNA(Thr). The chain is Threonine--tRNA ligase from Xylella fastidiosa (strain 9a5c).